Reading from the N-terminus, the 808-residue chain is Probable inorganic carbon transporter subunit DabA (808 aa).

Positions 334, 336, 494, and 509 each coordinate Zn(2+).

The protein belongs to the inorganic carbon transporter (TC 9.A.2) DabA family. As to quaternary structure, forms a complex with DabB. Requires Zn(2+) as cofactor.

Its subcellular location is the cell inner membrane. In terms of biological role, part of an energy-coupled inorganic carbon pump. In Rhodopseudomonas palustris (strain BisB5), this protein is Probable inorganic carbon transporter subunit DabA.